The following is a 102-amino-acid chain: MEKQNIRIKLRAYDNKILDASTEEIVNTVKRTGATIKGPIPLPTRIERYTVLKGPHIDKKSREQFETRTHKRLIDIIEPTPQTVEALMKLDLASGVDVEIKI.

The protein belongs to the universal ribosomal protein uS10 family. As to quaternary structure, part of the 30S ribosomal subunit.

Involved in the binding of tRNA to the ribosomes. In Pelagibacter ubique (strain HTCC1062), this protein is Small ribosomal subunit protein uS10.